A 450-amino-acid polypeptide reads, in one-letter code: Guanine deaminase (450 aa).

Zn(2+) is bound by residues His-88 and His-90. Residues 90–93, 218–219, 245–248, and Asp-335 each bind substrate; these read HAPQ, RF, and HLSE. His-245 and Asp-335 together coordinate Zn(2+).

Belongs to the metallo-dependent hydrolases superfamily. ATZ/TRZ family. Requires Zn(2+) as cofactor.

It carries out the reaction guanine + H2O + H(+) = xanthine + NH4(+). The protein operates within purine metabolism; guanine degradation; xanthine from guanine: step 1/1. Its function is as follows. Catalyzes the hydrolytic deamination of guanine, producing xanthine and ammonia. This is Guanine deaminase (guaD) from Dictyostelium discoideum (Social amoeba).